A 146-amino-acid polypeptide reads, in one-letter code: Probable NADH dehydrogenase [ubiquinone] 1 alpha subcomplex subunit 12 (146 aa).

This sequence belongs to the complex I NDUFA12 subunit family. In terms of assembly, complex I is composed of 45 different subunits.

The protein localises to the mitochondrion inner membrane. Accessory subunit of the mitochondrial membrane respiratory chain NADH dehydrogenase (Complex I), that is believed not to be involved in catalysis. Complex I functions in the transfer of electrons from NADH to the respiratory chain. The immediate electron acceptor for the enzyme is believed to be ubiquinone. This Caenorhabditis elegans protein is Probable NADH dehydrogenase [ubiquinone] 1 alpha subcomplex subunit 12.